The sequence spans 165 residues: Protein eva-1 homolog B (165 aa).

Residues 29–49 (GLYFVLGVCFGLLLTLCLLVI) form a helical membrane-spanning segment. Disordered stretches follow at residues 57–109 (PRPR…GPLN) and 143–165 (LLGTGTLGPSPTATGTLGRMHYY). Positions 74–84 (EPEDDDEDEED) are enriched in acidic residues. A phosphothreonine mark is found at Thr-85, Thr-148, and Thr-158.

The protein belongs to the EVA1 family.

The protein localises to the membrane. The polypeptide is Protein eva-1 homolog B (EVA1B) (Homo sapiens (Human)).